The chain runs to 200 residues: Late embryogenesis abundant protein 19 (200 aa).

Disordered stretches follow at residues 1–158 and 172–200; these read MASH…KSTV and TEDK…ARDH. Basic and acidic residues-rich tracts occupy residues 13 to 23, 30 to 42, 53 to 81, 88 to 97, and 105 to 114; these read GETKAHTEEKA, SKDK…DRAS, QDTK…KDKT, ARDKAAESKD, and EKTEQAKQKA. A coiled-coil region spans residues 52 to 81; that stretch reads GQDTKEATKEKAQAAKERASETAQAAKDKT. Low complexity predominate over residues 115–130; the sequence is AETAGAAKQKTAETAQ. The span at 145 to 156 shows a compositional bias: polar residues; that stretch reads SVLQQASEQVKS. A compositionally biased stretch (basic and acidic residues) spans 172–183; it reads TEDKAGTDDGAN. Residues 186-200 are compositionally biased toward low complexity; sequence TSATAAATETTARDH.

Belongs to the LEA type 4 family. In terms of tissue distribution, expressed in the shoot apex and leaves.

Functionally, involved in response to drought stress. This is Late embryogenesis abundant protein 19 from Oryza sativa subsp. indica (Rice).